The following is a 260-amino-acid chain: MAKEWGYASHNGPDHWHELFPNAKGENQSPVELHTKDIRHDPSLQPWSVSYDGGSAKTILNNGKTCRVVFDDTYDRSMLRGGPLPGPYRLRQFHLHWGSSDDHGSEHTVDGVKYAAELHLVHWNPKYNTFKEALKQRDGIAVIGIFLKIGHENGEFQIFLDALDKIKTKGKEAPFTKFDPSCLFPACRDYWTYQGSFTTPPCEECIVWLLLKEPMTVSSDQMAKLRSLLSSAENEPPVPLVSNWRPPQPINNRVVRASFK.

Ala-2 carries the post-translational modification N-acetylalanine. An Alpha-carbonic anhydrase domain is found at 3 to 259 (KEWGYASHNG…INNRVVRASF (257 aa)). 5 positions are modified to phosphoserine: Ser-29, Ser-43, Ser-48, Ser-50, and Ser-55. An involved in proton transfer region spans residues 64–67 (KTCR). Phosphothreonine is present on Thr-73. Zn(2+) is bound by residues His-94, His-96, and His-119. A Phosphotyrosine modification is found at Tyr-127. Phosphothreonine is present on residues Thr-129 and Thr-176. S-glutathionyl cysteine is present on residues Cys-182 and Cys-187. 198–199 (TT) is a binding site for substrate. Position 216 is a phosphothreonine (Thr-216). Ser-219 is subject to Phosphoserine.

The protein belongs to the alpha-carbonic anhydrase family. Requires Zn(2+) as cofactor. Post-translationally, S-thiolated both by thiol-disulfide exchange with glutathione disulfide and by oxyradical-initiated S-thiolation with reduced glutathione. S-glutathionylated in hepatocytes under oxidative stress. Muscle specific.

It is found in the cytoplasm. It carries out the reaction hydrogencarbonate + H(+) = CO2 + H2O. Activated by proton donors such as imidazole and the dipeptide histidylhistidine. Inhibited by coumarins and sulfonamide derivatives such as acetazolamide. In terms of biological role, reversible hydration of carbon dioxide. In Homo sapiens (Human), this protein is Carbonic anhydrase 3.